We begin with the raw amino-acid sequence, 130 residues long: Small ribosomal subunit protein uS8 (130 aa).

The protein belongs to the universal ribosomal protein uS8 family. Part of the 30S ribosomal subunit. Contacts proteins S5 and S12.

One of the primary rRNA binding proteins, it binds directly to 16S rRNA central domain where it helps coordinate assembly of the platform of the 30S subunit. In Coxiella burnetii (strain Dugway 5J108-111), this protein is Small ribosomal subunit protein uS8.